A 501-amino-acid chain; its full sequence is Glutamyl-tRNA(Gln) amidotransferase subunit A (501 aa).

Residues Lys80 and Ser155 each act as charge relay system in the active site. Ser179 (acyl-ester intermediate) is an active-site residue.

This sequence belongs to the amidase family. GatA subfamily. In terms of assembly, heterotrimer of A, B and C subunits.

The enzyme catalyses L-glutamyl-tRNA(Gln) + L-glutamine + ATP + H2O = L-glutaminyl-tRNA(Gln) + L-glutamate + ADP + phosphate + H(+). Allows the formation of correctly charged Gln-tRNA(Gln) through the transamidation of misacylated Glu-tRNA(Gln) in organisms which lack glutaminyl-tRNA synthetase. The reaction takes place in the presence of glutamine and ATP through an activated gamma-phospho-Glu-tRNA(Gln). The chain is Glutamyl-tRNA(Gln) amidotransferase subunit A from Cutibacterium acnes (strain DSM 16379 / KPA171202) (Propionibacterium acnes).